A 193-amino-acid polypeptide reads, in one-letter code: Apoptosis-associated speck-like protein containing a CARD (193 aa).

Residues 1–91 (MGRARDAILD…AEQLQTTKEE (91 aa)) enclose the Pyrin domain. Residues K55 and K172 each participate in a glycyl lysine isopeptide (Lys-Gly) (interchain with G-Cter in ubiquitin) cross-link. The CARD domain maps to 105-193 (STARTGHFVD…PYLVMDLEQS (89 aa)). Phosphoserine is present on S193.

Self-associates; enforced oligomerization induces apoptosis, NF-kappa-B regulation and interleukin-1 beta secretion. Homooligomers can form disk-like particles of approximately 12 nm diameter and approximately 1 nm height. Component of several inflammasomes containing one pattern recognition receptor/sensor, such as NLRP2, NLRP3, NLRP6, NLRC4, AIM2, MEFV or NOD2, and probably NLRC4 or NLRP12. Major component of the ASC pyroptosome, a 1-2 um supramolecular assembly (one per macrophage cell) which consists of oligomerized PYCARD dimers and CASP1. Interacts with CASP1 (precursor form); the interaction induces activation of CASP1 leading to the processing of interleukin-1 beta; PYCARD competes with RIPK2 for binding to CASP1. Interacts with NLRP3; the interaction requires the homooligomerization of NLRP3. Interacts with NLRP2, NLRC4, MEFV, CARD16, AIM2, NOD2, RIGI, RIPK2, PYDC1, PYDC2, NLRP10, CHUK, IKBKB and BAX. Interacts with CASP8. Component of the AIM2 PANoptosome complex, a multiprotein complex that drives inflammatory cell death (PANoptosis). Post-translationally, phosphorylated. In terms of processing, 'Lys-63'-linked polyubiquitination by TRAF3 is critical for speck formation and inflammasome activation. 'Lys-63'-linked deubiquitinated by USP50; a crucial step for NLRP3-mediated inflammasome activation. 'Lys-63'-linked polyubiquitination by PELI1 is also critical for speck formation and inflammasome activation. Deubiquitinated by USP3 that cleaves 'Lys-48'-linked ubiquitin chains and strengthens its stability by blocking proteasomal degradation. In terms of tissue distribution, expressed in small intestine, colon, thymus, spleen, brain, heart, skeletal muscle, kidney, lung and liver.

Its subcellular location is the cytoplasm. It localises to the inflammasome. It is found in the endoplasmic reticulum. The protein resides in the mitochondrion. The protein localises to the nucleus. Functionally, functions as a key mediator in apoptosis and inflammation. Promotes caspase-mediated apoptosis involving predominantly caspase-8 and also caspase-9 in a probable cell type-specific manner. Involved in activation of the mitochondrial apoptotic pathway, promotes caspase-8-dependent proteolytic maturation of BID independently of FADD in certain cell types and also mediates mitochondrial translocation of BAX and activates BAX-dependent apoptosis coupled to activation of caspase-9, -2 and -3. Involved in innate immune response by acting as an integral adapter in the assembly of various inflammasomes (NLRP2, NLRP3, NLRP6 and AIM2) which recruit and activate caspase-1 leading to processing and secretion of pro-inflammatory cytokines. Caspase-1-dependent inflammation leads to macrophage pyroptosis, a form of cell death. The function as activating adapter in different types of inflammasomes is mediated by the pyrin and CARD domains and their homotypic interactions. Clustered PYCARD nucleates the formation of caspase-1 filaments through the interaction of their respective CARD domains, acting as a platform for of caspase-1 polymerization. In the NLRC4 inflammasomes seems not be required but facilitates the processing of procaspase-1. In cooperation with NOD2 involved in an inflammasome activated by bacterial muramyl dipeptide leading to caspase-1 activation. May be involved in RIGI-triggered pro-inflammatory responses and inflammasome activation. In collaboration with AIM2 which detects cytosolic double-stranded DNA may also be involved in a caspase-1-independent cell death that involves caspase-8. In adaptive immunity may be involved in maturation of dendritic cells to stimulate T-cell immunity and in cytoskeletal rearrangements coupled to chemotaxis and antigen uptake may be involved in post-transcriptional regulation of the guanine nucleotide exchange factor DOCK2; the latter function is proposed to involve the nuclear form. Also involved in transcriptional activation of cytokines and chemokines independent of the inflammasome; this function may involve AP-1, NF-kappa-B, MAPK and caspase-8 signaling pathways. For regulation of NF-kappa-B activating and inhibiting functions have been reported. Modulates NF-kappa-B induction at the level of the IKK complex by inhibiting kinase activity of CHUK and IKBK. Proposed to compete with RIPK2 for association with CASP1 thereby down-regulating CASP1-mediated RIPK2-dependent NF-kappa-B activation and activating interleukin-1 beta processing. Modulates host resistance to DNA virus infection, probably by inducing the cleavage of and inactivating CGAS in presence of cytoplasmic double-stranded DNA. The chain is Apoptosis-associated speck-like protein containing a CARD (Pycard) from Mus musculus (Mouse).